The primary structure comprises 426 residues: Serine hydroxymethyltransferase (426 aa).

(6S)-5,6,7,8-tetrahydrofolate is bound by residues Leu111 and 115–117 (GHL). N6-(pyridoxal phosphate)lysine is present on Lys220.

This sequence belongs to the SHMT family. As to quaternary structure, homodimer. The cofactor is pyridoxal 5'-phosphate.

It is found in the cytoplasm. It catalyses the reaction (6R)-5,10-methylene-5,6,7,8-tetrahydrofolate + glycine + H2O = (6S)-5,6,7,8-tetrahydrofolate + L-serine. It participates in one-carbon metabolism; tetrahydrofolate interconversion. The protein operates within amino-acid biosynthesis; glycine biosynthesis; glycine from L-serine: step 1/1. Functionally, catalyzes the reversible interconversion of serine and glycine with tetrahydrofolate (THF) serving as the one-carbon carrier. This reaction serves as the major source of one-carbon groups required for the biosynthesis of purines, thymidylate, methionine, and other important biomolecules. Also exhibits THF-independent aldolase activity toward beta-hydroxyamino acids, producing glycine and aldehydes, via a retro-aldol mechanism. This chain is Serine hydroxymethyltransferase, found in Orientia tsutsugamushi (strain Ikeda) (Rickettsia tsutsugamushi).